The following is a 103-amino-acid chain: Small ribosomal subunit protein uS10 (103 aa).

The protein belongs to the universal ribosomal protein uS10 family. In terms of assembly, part of the 30S ribosomal subunit.

Its function is as follows. Involved in the binding of tRNA to the ribosomes. The chain is Small ribosomal subunit protein uS10 from Escherichia coli O127:H6 (strain E2348/69 / EPEC).